The sequence spans 63 residues: Large ribosomal subunit protein bL28 (63 aa).

The protein belongs to the bacterial ribosomal protein bL28 family.

The polypeptide is Large ribosomal subunit protein bL28 (Treponema denticola (strain ATCC 35405 / DSM 14222 / CIP 103919 / JCM 8153 / KCTC 15104)).